A 461-amino-acid chain; its full sequence is Glucan endo-1,3-beta-glucosidase (461 aa).

The N-terminal stretch at 1-23 is a signal peptide; the sequence is MPLLILLMLLAAGAAGAESATPS. Catalysis depends on Glu-123, which acts as the Proton donor. The Nucleophile role is filled by Glu-265. The tract at residues 350–375 is disordered; it reads GASVAPTPSPNPSPNPSPKPAPSGGG. Residues 356–370 are compositionally biased toward pro residues; it reads TPSPNPSPNPSPKPA. Residues Cys-378 and Cys-439 are joined by a disulfide bond.

The protein belongs to the glycosyl hydrolase 17 family. Contains two additional disulfide bonds.

The catalysed reaction is Hydrolysis of (1-&gt;3)-beta-D-glucosidic linkages in (1-&gt;3)-beta-D-glucans.. Is thought to be an important plant defense-related product against fungal pathogens. The polypeptide is Glucan endo-1,3-beta-glucosidase (GLC1) (Triticum aestivum (Wheat)).